Here is a 122-residue protein sequence, read N- to C-terminus: Basic phospholipase A2 CbII (122 aa).

7 disulfide bridges follow: Cys-26–Cys-115, Cys-28–Cys-44, Cys-43–Cys-95, Cys-49–Cys-122, Cys-50–Cys-88, Cys-57–Cys-81, and Cys-75–Cys-86. 3 residues coordinate Ca(2+): Tyr-27, Gly-29, and Gly-31. His-47 is a catalytic residue. Ca(2+) is bound at residue Asp-48. Asp-89 is a catalytic residue.

It belongs to the phospholipase A2 family. Group I subfamily. D49 sub-subfamily. Heterodimer of an acidic subunit (CbIalpha or CbIbeta) and a basic subunit (CbII). The acidic subunit is non-toxic, and increases the toxicity of the basic subunit. Ca(2+) serves as cofactor. Expressed by the venom gland.

It is found in the secreted. The enzyme catalyses a 1,2-diacyl-sn-glycero-3-phosphocholine + H2O = a 1-acyl-sn-glycero-3-phosphocholine + a fatty acid + H(+). Functionally, heterodimer: presynaptic neurotoxin. In terms of biological role, monomer: Snake venom phospholipase A2 (PLA2) that exhibits strong anticoagulant effects by binding to factor Xa (F10) and inhibiting the prothrombinase activity (IC(50) is 20 nM). PLA2 catalyzes the calcium-dependent hydrolysis of the 2-acyl groups in 3-sn-phosphoglycerides. The sequence is that of Basic phospholipase A2 CbII from Pseudocerastes fieldi (Field's horned viper).